The sequence spans 459 residues: DIMBOA UDP-glucosyltransferase BX8 (459 aa).

His-19 functions as the Proton acceptor in the catalytic mechanism. His-19 provides a ligand contact to an anthocyanidin. The Charge relay role is filled by Asp-119. Thr-141, Ala-340, Gln-342, His-357, Trp-360, Asn-361, Ser-362, and Glu-365 together coordinate UDP-alpha-D-glucose. Gly-380 is an an anthocyanidin binding site. UDP-alpha-D-glucose-binding residues include Asp-381 and Gln-382.

This sequence belongs to the UDP-glycosyltransferase family. Mg(2+) is required as a cofactor. It depends on Ca(2+) as a cofactor. As to expression, expressed at the same levels in roots and shoots.

It catalyses the reaction DIMBOA + UDP-alpha-D-glucose = DIMBOA beta-D-glucoside + UDP + H(+). The enzyme catalyses DIBOA + UDP-alpha-D-glucose = DIBOA beta-D-glucoside + UDP + H(+). Its function is as follows. Glucosyltransferase involved in the last step of benzoxazinoid glucoside biosynthesis. Catalyzes the glucosylation of hydroxamic acids utilizing UDP-glucose as glucose doner, reducing the toxicity of these natural insecticides for storage. Can use DIMBOA and DIBOA as substrates, HMBOA (2-hydroxy-7-methoxy-2H-1,4-benzoxazin-3(4H)-one) and HBOA (2-hydroxy-2H-1,4-benzoxazin-3(4H)-one) with a lower efficiency, but not indole acetic acid or quercitin. This chain is DIMBOA UDP-glucosyltransferase BX8 (Bx8), found in Zea mays (Maize).